The following is a 324-amino-acid chain: Probable tRNA pseudouridine synthase B (324 aa).

Asp-72 acts as the Nucleophile in catalysis. A PUA domain is found at 239-314; that stretch reads LPRVVILDSA…LVIETRKVFM (76 aa).

The protein belongs to the pseudouridine synthase TruB family. Type 2 subfamily.

It carries out the reaction uridine(55) in tRNA = pseudouridine(55) in tRNA. Functionally, could be responsible for synthesis of pseudouridine from uracil-55 in the psi GC loop of transfer RNAs. The sequence is that of Probable tRNA pseudouridine synthase B from Methanothermobacter thermautotrophicus (strain ATCC 29096 / DSM 1053 / JCM 10044 / NBRC 100330 / Delta H) (Methanobacterium thermoautotrophicum).